We begin with the raw amino-acid sequence, 257 residues long: MTTTQVTLIQIDNYGPWTVTPEPRREMDLQSLQSRLFADIAQFMGPRDAYVFSTRYDNMIAVTNGLDGAAHAALQESIGNRYPVSVSLGTGVSERPIDALEAANRLLQTEGSAQDESRTEVLAGDYLTETAPSDLQIAHFDVVNVTGKYTDRLNEFDTFLNIERAYGSLTRYLRESHGALSFFVGGDNVVAVCPDLPEGAFADTVAHVADDVDIELQVGVGRGASAHEAGFAAKHALEACRNDGTSVELSVAPALSD.

This sequence belongs to the archaeal-type GTP cyclohydrolase family.

It carries out the reaction GTP + 3 H2O = 2-amino-5-formylamino-6-(5-phospho-D-ribosylamino)pyrimidin-4(3H)-one + 2 phosphate + 2 H(+). In terms of biological role, catalyzes the formation of 2-amino-5-formylamino-6-ribofuranosylamino-4(3H)-pyrimidinone ribonucleotide monophosphate and inorganic phosphate from GTP. Also has an independent pyrophosphate phosphohydrolase activity. This Halorubrum lacusprofundi (strain ATCC 49239 / DSM 5036 / JCM 8891 / ACAM 34) protein is GTP cyclohydrolase III.